The following is a 284-amino-acid chain: 4-hydroxybenzoate octaprenyltransferase (284 aa).

9 helical membrane-spanning segments follow: residues 19–39 (IPILLILWPTLTALVLASHGL), 42–62 (ISYLVIFTIGVVVMRTVGCII), 85–105 (GQLSIKNAIWLCISLTLVAFI), 107–127 (VLFLNLYTILLSFVALFLAIL), 134–154 (FFAIPQLILGLAFNFGIFMAF), 165–185 (AWIFYIATICWTIAYDTIYAL), 211–231 (ILLFNFLSLLLLIILGIYCDF), 233–253 (SFFYLGVVICSLFFVRNYFLY), and 261–281 (CINAFSANHWIGLIIFIIAVI).

This sequence belongs to the UbiA prenyltransferase family. The cofactor is Mg(2+).

The protein localises to the cell inner membrane. It catalyses the reaction all-trans-octaprenyl diphosphate + 4-hydroxybenzoate = 4-hydroxy-3-(all-trans-octaprenyl)benzoate + diphosphate. Its pathway is cofactor biosynthesis; ubiquinone biosynthesis. In terms of biological role, catalyzes the prenylation of para-hydroxybenzoate (PHB) with an all-trans polyprenyl group. Mediates the second step in the final reaction sequence of ubiquinone-8 (UQ-8) biosynthesis, which is the condensation of the polyisoprenoid side chain with PHB, generating the first membrane-bound Q intermediate 3-octaprenyl-4-hydroxybenzoate. In Francisella tularensis subsp. tularensis (strain FSC 198), this protein is 4-hydroxybenzoate octaprenyltransferase.